The following is a 741-amino-acid chain: Pentatricopeptide repeat-containing protein At1g08070, chloroplastic (741 aa).

PPR repeat units follow at residues 98 to 132, 133 to 167, 168 to 202, 203 to 229, 230 to 264, 265 to 299, 300 to 330, 331 to 365, 366 to 396, 403 to 433, 434 to 468, 469 to 499, and 505 to 535; these read NLLI…GLLP, NSYT…GCDL, DLYV…DVVS, YTAL…IPVK, DVVS…NVRP, DEST…GFGS, NLKI…LPYK, DVIS…GETP, NDVT…IDKR, ASSL…ILHK, SLSS…GIQP, DDIT…MTQD, and KLEH…MEME. A type E motif region spans residues 540 to 615; the sequence is IWCSLLKACK…VPGCSSIEID (76 aa). A type E(+) motif region spans residues 616–646; that stretch reads SVVHEFIIGDKFHPRNREIYGMLEEMEVLLE. The interval 647–741 is type DYW motif; sequence KAGFVPDTSE…DGVCSCNDYW (95 aa).

Belongs to the PPR family. PCMP-H subfamily. Interacts with ORRM1. Interacts with VAR3/OZ1.

The protein resides in the plastid. Its subcellular location is the chloroplast. Functionally, involved in multiple sites RNA editing events in chloroplasts. Involved in the editing of the site 9 of ndhB (ndhB-9) and site 1 of ndhG (ndhG-1) transcripts, which are two plastid-encoded subunits of the chloroplast NAD(P)H dehydrogenase (NDH) complex. Not essential for the activity of the NDH complex of the photosynthetic electron transport chain. The sequence is that of Pentatricopeptide repeat-containing protein At1g08070, chloroplastic (PCMP-H12) from Arabidopsis thaliana (Mouse-ear cress).